Here is a 276-residue protein sequence, read N- to C-terminus: Diaminopimelate epimerase (276 aa).

Substrate contacts are provided by N13, Q46, and N66. The active-site Proton donor is C75. Substrate-binding positions include 76–77 (GN), N159, N192, and 210–211 (ER). Residue C219 is the Proton acceptor of the active site. Residue 220-221 (GT) participates in substrate binding.

It belongs to the diaminopimelate epimerase family. In terms of assembly, homodimer.

It localises to the cytoplasm. The catalysed reaction is (2S,6S)-2,6-diaminopimelate = meso-2,6-diaminopimelate. It functions in the pathway amino-acid biosynthesis; L-lysine biosynthesis via DAP pathway; DL-2,6-diaminopimelate from LL-2,6-diaminopimelate: step 1/1. Catalyzes the stereoinversion of LL-2,6-diaminopimelate (L,L-DAP) to meso-diaminopimelate (meso-DAP), a precursor of L-lysine and an essential component of the bacterial peptidoglycan. The protein is Diaminopimelate epimerase of Pseudomonas aeruginosa (strain LESB58).